Here is a 552-residue protein sequence, read N- to C-terminus: Putative transport protein APL_0966 (552 aa).

A run of 5 helical transmembrane segments spans residues 4 to 24, 29 to 49, 65 to 85, 95 to 115, and 161 to 181; these read IAIIVSLLSLVAVLGLWIGHI, VGLGIGGVLFGGIIISHCTHL, FGLILFVYSIGIQVGPGFFAS, GFAVMIVGLSGILVALIHKLF, and IAYPFGIIGILLSMWLIRIIF. RCK C-terminal domains lie at 190–275 and 277–360; these read QEFD…ILGE and ADVS…IIGD. Helical transmembrane passes span 370–390, 402–424, 438–458, 463–483, 492–512, and 529–549; these read MLPIFVGIGLGVLLGSLPLYI, AGGPLVVALILARIGSIGKLYWF, IVLFLSVVGLKAGANFLDTLL, LAWMGYGAIITFIPLIVTGFV, YLSLCGLLSGAMTDPPALAFA, and VYPLVMFLRIILPQLLAILLW.

It belongs to the AAE transporter (TC 2.A.81) family. YidE subfamily.

It is found in the cell membrane. The protein is Putative transport protein APL_0966 of Actinobacillus pleuropneumoniae serotype 5b (strain L20).